We begin with the raw amino-acid sequence, 353 residues long: Dimethylsulfoniopropionate lyase 2 (353 aa).

Residues cysteine 125 and cysteine 274 each act as proton donor/acceptor in the active site. Positions 326–353 (DPNETDVSKGRPTKAEHRFGPEFEEMLQ) are disordered. Over residues 331-346 (DVSKGRPTKAEHRFGP) the composition is skewed to basic and acidic residues.

This sequence belongs to the aspartate/glutamate racemases family. ALMA1 subfamily. In terms of assembly, homotetramer.

It carries out the reaction S,S-dimethyl-beta-propiothetin = acrylate + dimethyl sulfide + H(+). In terms of biological role, mediates cleavage of dimethylsulfoniopropionate (DMSP) into dimethyl sulfide (DMS) and acrylate. DMS is the principal form by which sulfur is transported from oceans to the atmosphere and is a key component of the ocean sulfur cycle. This is Dimethylsulfoniopropionate lyase 2 from Emiliania huxleyi (strain CCMP1516).